Here is a 283-residue protein sequence, read N- to C-terminus: Bifunctional protein FolD (283 aa).

Residues 165-167 (GRS) and Ser190 contribute to the NADP(+) site.

The protein belongs to the tetrahydrofolate dehydrogenase/cyclohydrolase family. In terms of assembly, homodimer.

It catalyses the reaction (6R)-5,10-methylene-5,6,7,8-tetrahydrofolate + NADP(+) = (6R)-5,10-methenyltetrahydrofolate + NADPH. The catalysed reaction is (6R)-5,10-methenyltetrahydrofolate + H2O = (6R)-10-formyltetrahydrofolate + H(+). The protein operates within one-carbon metabolism; tetrahydrofolate interconversion. Catalyzes the oxidation of 5,10-methylenetetrahydrofolate to 5,10-methenyltetrahydrofolate and then the hydrolysis of 5,10-methenyltetrahydrofolate to 10-formyltetrahydrofolate. In Variovorax paradoxus (strain S110), this protein is Bifunctional protein FolD.